A 213-amino-acid polypeptide reads, in one-letter code: MKPYQRQFIEFALSKQVLKFGEFTLKSGRKSPYFFNAGLFNTGRDLALLGRFYAEALVDSGIEFDLLFGPAYKGIPIATTTAVALAEHHDLDLPYCFNRKEAKDHGEGGNLVGSALQGRIMLVDDVITAGTAIRESMEIIQANGATLAGVLISLDRQERGRGEISAIQEVERDYNCKVISIITLKDLIAYLEEKPEMAEHLAAVKAYREEFGV.

Lys-26 contributes to the 5-phospho-alpha-D-ribose 1-diphosphate binding site. Position 34 to 35 (34 to 35) interacts with orotate; sequence FF. 5-phospho-alpha-D-ribose 1-diphosphate is bound by residues 72–73, Arg-99, Lys-100, Lys-103, His-105, and 124–132; these read YK and DDVITAGTA. Orotate-binding residues include Thr-128 and Arg-156.

This sequence belongs to the purine/pyrimidine phosphoribosyltransferase family. PyrE subfamily. Homodimer. The cofactor is Mg(2+).

The enzyme catalyses orotidine 5'-phosphate + diphosphate = orotate + 5-phospho-alpha-D-ribose 1-diphosphate. The protein operates within pyrimidine metabolism; UMP biosynthesis via de novo pathway; UMP from orotate: step 1/2. Functionally, catalyzes the transfer of a ribosyl phosphate group from 5-phosphoribose 1-diphosphate to orotate, leading to the formation of orotidine monophosphate (OMP). In Escherichia coli O45:K1 (strain S88 / ExPEC), this protein is Orotate phosphoribosyltransferase.